The following is a 215-amino-acid chain: MSACLGFRELGLQPYEPVLEAMRRFTEQRSPDSQDEIWLVEHPAVFTQGQAGKAEHLLVPGDIPVVQTDRGGQVTYHGPGQQVAYLLLDVRRLGFGVRELVSRIEQALIGLLASYDVQASAKPDAPGVYVDGAKIASLGLRIRNGRSFHGLALNVDMDLAPFRRINPCGYAGLAMTQLRDLAGPIELDEVRTRLRGQLVKHLDYAEQTTLTGGID.

The region spanning 31-206 (PDSQDEIWLV…QLVKHLDYAE (176 aa)) is the BPL/LPL catalytic domain. Substrate is bound by residues 70 to 77 (RGGQVTYH), 137 to 139 (SLG), and 150 to 152 (GLA). C168 acts as the Acyl-thioester intermediate in catalysis.

The protein belongs to the LipB family.

It is found in the cytoplasm. The catalysed reaction is octanoyl-[ACP] + L-lysyl-[protein] = N(6)-octanoyl-L-lysyl-[protein] + holo-[ACP] + H(+). The protein operates within protein modification; protein lipoylation via endogenous pathway; protein N(6)-(lipoyl)lysine from octanoyl-[acyl-carrier-protein]: step 1/2. Its function is as follows. Catalyzes the transfer of endogenously produced octanoic acid from octanoyl-acyl-carrier-protein onto the lipoyl domains of lipoate-dependent enzymes. Lipoyl-ACP can also act as a substrate although octanoyl-ACP is likely to be the physiological substrate. The chain is Octanoyltransferase from Pseudomonas putida (strain GB-1).